We begin with the raw amino-acid sequence, 123 residues long: Preprofallaxidin-3 (123 aa).

Residues 1–22 (MASLKKSLFLVLFLGLVSLSIC) form the signal peptide. Positions 23–46 (EEKKRENEDDAEDENHEEESEEKR) are excised as a propeptide. The interval 26–46 (KRENEDDAEDENHEEESEEKR) is disordered. Acidic residues predominate over residues 30–42 (EDDAEDENHEEES). Leu62 carries the post-translational modification Leucine amide. Positions 66–70 (SEEKR) are excised as a propeptide. Phe74 carries the phenylalanine amide modification. Residues 78–82 (SEEKR) constitute a propeptide that is removed on maturation. Position 88 is a phenylalanine amide (Phe88). Positions 92–96 (SEEKR) are excised as a propeptide. Ile102 bears the Isoleucine amide mark. Positions 106–110 (SEEKR) are excised as a propeptide. Position 116 is an isoleucine amide (Ile116). Positions 120-123 (KKKK) are excised as a propeptide.

It belongs to the frog skin active peptide (FSAP) family. Brevinin subfamily. Expressed by the skin glands.

It is found in the secreted. Functionally, fallaxidin-1.1 shows no antibacterial activity against Gram-positive or Gram-negative bacteria. Does not inhibit the formation of NO by neuronal nitric oxide synthase. Has no effect on splenocyte proliferation or smooth muscle contraction. Fallaxidin-1.2 shows no antibacterial activity against Gram-positive or Gram-negative bacteria. Does not inhibit the formation of NO by neuronal nitric oxide synthase. Has no effect on splenocyte proliferation or smooth muscle contraction. In terms of biological role, fallaxidin-1.3 shows no antibacterial activity against Gram-positive or Gram-negative bacteria. Does not inhibit the formation of NO by neuronal nitric oxide synthase. Has no effect on splenocyte proliferation or smooth muscle contraction. Its function is as follows. Fallaxidin-3.2 shows antibacterial activity against the Gram-positive bacteria E.faecalis (MIC=100 uM) and L.lactis (MIC=500 uM). No antibacterial activity against the Gram-positive bacteria B.cereus, L.innocua, M.luteus, S.epidermidis, S.uberis and S.aureus, or the Gram-negative bacteria E.cloacae and E.coli. The chain is Preprofallaxidin-3 from Litoria fallax (Eastern dwarf tree frog).